The chain runs to 245 residues: MAPK-interacting and spindle-stabilizing protein-like (245 aa).

Residues 1–245 (MSDEFSLADA…PMPGGPHSYH (245 aa)) are disordered. At Ser2 the chain carries N-acetylserine. 3 positions are modified to phosphoserine: Ser2, Ser6, and Ser15. Polar residues predominate over residues 17-26 (AKTSAVSNTK). The segment covering 34–51 (WPGSNPWNNPSAPSSVPS) has biased composition (low complexity). 3 stretches are compositionally biased toward pro residues: residues 74–127 (SVPP…PELP), 164–190 (PNMP…PPVP), and 198–207 (AWGPPAPYPA).

This sequence belongs to the MISS family.

This is MAPK-interacting and spindle-stabilizing protein-like (MAPK1IP1L) from Homo sapiens (Human).